A 419-amino-acid chain; its full sequence is O-methyltransferase gsfB (419 aa).

S-adenosyl-L-methionine contacts are provided by residues Gly-255–Gly-256, Asp-278, Asp-300–Phe-301, and Arg-316. Catalysis depends on His-320, which acts as the Proton acceptor.

Belongs to the class I-like SAM-binding methyltransferase superfamily. Cation-independent O-methyltransferase family.

It catalyses the reaction 2-(2,4-dihydroxy-6-oxidobenzoyl)-5-hydroxy-3-methylbenzenolate + S-adenosyl-L-methionine = griseophenone D + S-adenosyl-L-homocysteine + H(+). Its pathway is secondary metabolite biosynthesis; terpenoid biosynthesis. Its function is as follows. O-methyltransferase; part of the gene cluster that mediates the biosynthesis of griseofulvin, an important antifungal drug that has been in use for a long time for treating dermatophyte infections. The first step of the pathway is the formation of the heptaketide backbone by gsfA which is initiated by priming with acetyl-CoA, followed by sequential condensations of 6 malonyl-CoA units. The resulting benzophenone can undergo a spontaneous dehydration to form norlichexanthone. However, the true precursor for the griseofulvin biosynthesis is not norlichexanthone, but the heptaketide benzophenone that is O-methylated at 3-OH by gsfB to produce griseophenone D which is further methylated at 9-OH by gsfC to yield griseophenone C. Griseophenone C is then substrate of halogenase gsfI which is responsible for the regio-specific chlorination at the C13 position to form griseophenone B. The cytochrome P450 gsfF catalyzes the coupling of orcinol and phloroglucinol rings in griseophenone B to form desmethyl-dehydrogriseofulvin A which is further methylated at 5-OH by gsfD to yield dehydrogriseofulvin. Finally, gsfE performs stereospecific reduction of enone 18 of dehydrogriseofulvin to afford the final product griseofulvin. This is O-methyltransferase gsfB from Penicillium aethiopicum.